A 204-amino-acid chain; its full sequence is Ribonuclease HII (204 aa).

The 191-residue stretch at 14 to 204 (QYICGVDEVG…SFKLSCLGEK (191 aa)) folds into the RNase H type-2 domain. A divalent metal cation is bound by residues D20, E21, and D116.

This sequence belongs to the RNase HII family. It depends on Mn(2+) as a cofactor. Mg(2+) serves as cofactor.

The protein resides in the cytoplasm. It carries out the reaction Endonucleolytic cleavage to 5'-phosphomonoester.. Its function is as follows. Endonuclease that specifically degrades the RNA of RNA-DNA hybrids. In Chloroherpeton thalassium (strain ATCC 35110 / GB-78), this protein is Ribonuclease HII.